Here is a 784-residue protein sequence, read N- to C-terminus: MTKKLALKRKGKESEPINKVVASSEASENEEEEEDLLQAVKDPGEDSTDDEGIDQEYHSDSSEELQFESDEEGNYLGRKQSSSAEEDEESSDEDDDGEEESSDEEEVEDEEKDSKLKQSDDKPSSSGAASKKAPTTELSKRDTSKPEYQDSDTSDEEDIRNTVGNIPMHWYDEYKHIGYDWDAKKIIKPPQGDQIDEFLRKIEDPDFWRTVKDPLTGQDVRLTDEDIALIKRIVSGRIPNKDHEEYEPWIEWFTSEVEKMPIKNVPDHKRSFLPSVSEKKRVSRMVHALKMGWMKTTEEVEREKQAKRGPKFYMLWETDTSREHMRRIHDPVSAPKRDLPGHAESYNPPPEYLFDAKETKEWLKLKDEPHKRKLHFMPQKFKSLREVPAYSRYLRERFLRCLDLYLCPRAKRVKLNIDAEYLIPKLPSPRDLQPFPTVESMVYRGHTDLVRSVSVEPKGEYLVSGSDDKTVKIWEIATGRCIRTIETDEVVRCVAWCPNPKLSIIAVATGNRLLLVNPKVGDKVLVKKTDDLLAEAPSQDVIESERIKTAVQWSNAEADEQEKGVRVVITHFKPIRQVTWHGRGDYLATVMPEGANRSALIHQLSKRRSQIPFSKSKGLIQFVLFHPVKPCFFVATQHNIRIYDLVKQELVKKLLTNSKWISGMSIHPKGDNLLVSTYDKKMLWFDLDLSTKPYQTMRLHRNAVRSVAFHLRYPLFASGSDDQAVIVSHGMVYNDLLQNPLIVPLKKLQTHEKRDEFGVLDVNWHPVQPWVFSTGADSTIRLYT.

Residues 1-11 (MTKKLALKRKG) are compositionally biased toward basic residues. A disordered region spans residues 1–159 (MTKKLALKRK…DSDTSDEEDI (159 aa)). Composition is skewed to acidic residues over residues 27–36 (SENEEEEEDL), 45–54 (EDSTDDEGID), 62–73 (SEELQFESDEEG), and 84–111 (AEED…EDEE). The segment covering 112–123 (KDSKLKQSDDKP) has biased composition (basic and acidic residues). A compositionally biased stretch (low complexity) spans 124–133 (SSSGAASKKA). The segment covering 138–148 (LSKRDTSKPEY) has biased composition (basic and acidic residues). The segment covering 149–158 (QDSDTSDEED) has biased composition (acidic residues). WD repeat units lie at residues 445-486 (GHTD…RTIE), 488-526 (DEVV…KVLV), 570-612 (THFK…SQIP), 615-653 (KSKG…LVKK), 656-695 (TNSK…KPYQ), 699-738 (LHRN…DLLQ), and 754-784 (RDEF…RLYT).

Belongs to the WD repeat BOP1/ERB1 family.

It is found in the nucleus. It localises to the nucleolus. Its subcellular location is the nucleoplasm. Functionally, required for maturation of ribosomal RNAs and formation of the large ribosomal subunit. This chain is Ribosome biogenesis protein BOP1 homolog, found in Drosophila erecta (Fruit fly).